An 814-amino-acid polypeptide reads, in one-letter code: Protein kinase C-binding protein NELL2 (814 aa).

The N-terminal stretch at 1–19 (MEFILGIFCVIFCLRAGAG) is a signal peptide. Asparagine 51, asparagine 223, and asparagine 296 each carry an N-linked (GlcNAc...) asparagine glycan. The Laminin G-like domain occupies 53–226 (SKAFLFQDTS…SQCPDLNRTC (174 aa)). The VWFC 1 domain occupies 270-329 (RSCTVKGNIYRELESWMDGCKKCTCTNGTAQCETLTCSVPNCLSGFAPAYVPGKCCKECQ). An EGF-like 1 domain is found at 395-437 (GHDFCSEGHNCVEYSICKNLNDKAVCICRDGFRALREDSAYCE). Cystine bridges form between cysteine 399–cysteine 411, cysteine 405–cysteine 420, and cysteine 422–cysteine 436. The Ca(2+) site is built by aspartate 438, isoleucine 439, and glutamate 441. In terms of domain architecture, EGF-like 2; calcium-binding spans 438–479 (DIDECTEGRHYCRENTVCVNTPGSFMCVCQTGYLKIDDYSCT). 9 disulfides stabilise this stretch: cysteine 442–cysteine 455, cysteine 449–cysteine 464, cysteine 466–cysteine 478, cysteine 484–cysteine 497, cysteine 491–cysteine 506, cysteine 508–cysteine 519, cysteine 523–cysteine 533, cysteine 527–cysteine 539, and cysteine 541–cysteine 550. Residues asparagine 457, threonine 458, and serine 461 each coordinate Ca(2+). The 41-residue stretch at 480–520 (EHNECATNQHSCDENAVCYNTVGGHNCVCQPGYTGNGTVCK) folds into the EGF-like 3; calcium-binding domain. Residue asparagine 515 is glycosylated (N-linked (GlcNAc...) asparagine). The EGF-like 4 domain maps to 521–551 (AFCTDGCRNGGTCIAPNICACPQGFTGPSCE). Residues aspartate 553, isoleucine 554, and glutamate 556 each coordinate Ca(2+). The EGF-like 5; calcium-binding domain maps to 553 to 599 (DIDECTEGFVQCDSRANCINLPGWYHCECRDGYHDNGMFSLSGESCE). 3 disulfides stabilise this stretch: cysteine 557-cysteine 570, cysteine 564-cysteine 579, and cysteine 581-cysteine 598. 3 residues coordinate Ca(2+): asparagine 572, leucine 573, and tryptophan 576. Aspartate 600, isoleucine 601, and glutamate 603 together coordinate Ca(2+). Residues 600–635 (DIDECATGRHSCSNDTVCFNLDGGFDCRCPHGKNCS) form the EGF-like 6; calcium-binding domain. Cystine bridges form between cysteine 604-cysteine 617, cysteine 611-cysteine 626, and cysteine 628-cysteine 634. Asparagine 613 carries N-linked (GlcNAc...) asparagine glycosylation. Ca(2+) contacts are provided by asparagine 619, leucine 620, and glycine 623. Asparagine 633 carries an N-linked (GlcNAc...) asparagine glycan. 2 consecutive VWFC domains span residues 636-691 (GDCT…PECD) and 696-754 (SQCL…PRCI).

In terms of assembly, homotrimer.

It is found in the secreted. May regulate neuronal differentiation, polarization and axon guidance. The chain is Protein kinase C-binding protein NELL2 (nell2) from Xenopus tropicalis (Western clawed frog).